The sequence spans 381 residues: CCN family member 1 (381 aa).

An N-terminal signal peptide occupies residues 1 to 24 (MSSRIARALALVVTLLHLTRLALS). The IGFBP N-terminal domain occupies 25–94 (TCPAACHCPL…TALKGICRAQ (70 aa)). 6 disulfides stabilise this stretch: C26–C50, C30–C52, C32–C53, C39–C56, C64–C78, and C70–C91. The region spanning 98 to 164 (RPCEYNSRIY…GQCCEEWVCD (67 aa)) is the VWFC domain. The residue at position 188 (S188) is a Phosphoserine; by FAM20C. The 46-residue stretch at 228–273 (KCIVQTTSWSQCSKTCGTGISTRVTNDNPECRLVKETRICEVRPCG) folds into the TSP type-1 domain. Residues 279-315 (SLKKGKKCSKTKKSPEPVRFTYAGCLSVKKYRPKYCG) form a heparin-binding region. Disulfide bonds link C286–C323, C303–C337, C314–C353, C317–C355, and C322–C359. The region spanning 286 to 360 (CSKTKKSPEP…QSCKCNYNCP (75 aa)) is the CTCK domain.

The protein belongs to the CCN family. As to quaternary structure, interaction with integrins is heparin- and cell-type-dependent and promotes cell adhesion. In skin fibroblasts it binds ITGA6/ITGB1, in endothelial cells, binds ITGAV/ITGB3 and in platelets, ITGA2B/ITGB3. Binds, in vitro, ITGAV/ITGB5.

It localises to the secreted. Promotes cell proliferation, chemotaxis, angiogenesis and cell adhesion. Appears to play a role in wound healing by up-regulating, in skin fibroblasts, the expression of a number of genes involved in angiogenesis, inflammation and matrix remodeling including VEGA-A, VEGA-C, MMP1, MMP3, TIMP1, uPA, PAI-1 and integrins alpha-3 and alpha-5. CCN1-mediated gene regulation is dependent on heparin-binding. Down-regulates the expression of alpha-1 and alpha-2 subunits of collagen type-1. Promotes cell adhesion and adhesive signaling through integrin alpha-6/beta-1, cell migration through integrin alpha-v/beta-5 and cell proliferation through integrin alpha-v/beta-3. The protein is CCN family member 1 of Homo sapiens (Human).